The sequence spans 280 residues: Manganese import system permease protein ScaB (280 aa).

The next 8 membrane-spanning stretches (helical) occupy residues A18 to L38, I61 to I81, T94 to A114, T139 to L159, V174 to Q194, V196 to A216, M222 to Y242, and I246 to I266.

This sequence belongs to the ABC-3 integral membrane protein family.

Its subcellular location is the cell membrane. In terms of biological role, part of an ABC transporter complex involved in manganese import. This Streptococcus parasanguinis protein is Manganese import system permease protein ScaB.